A 209-amino-acid polypeptide reads, in one-letter code: Ubiquitin-conjugating enzyme E2 S (209 aa).

The UBC core domain maps to 14–160 (QTIRQVMREL…ARMMTEIHAQ (147 aa)). Cys98 serves as the catalytic Glycyl thioester intermediate. A disordered region spans residues 165–209 (GVGATGDAKDDGGPSTKKHAGLDKKLQDKKKEKLLKEKKRMLKRL). Over residues 184 to 199 (AGLDKKLQDKKKEKLL) the composition is skewed to basic and acidic residues. The span at 200–209 (KEKKRMLKRL) shows a compositional bias: basic residues.

Belongs to the ubiquitin-conjugating enzyme family.

The enzyme catalyses S-ubiquitinyl-[E1 ubiquitin-activating enzyme]-L-cysteine + [E2 ubiquitin-conjugating enzyme]-L-cysteine = [E1 ubiquitin-activating enzyme]-L-cysteine + S-ubiquitinyl-[E2 ubiquitin-conjugating enzyme]-L-cysteine.. Its pathway is protein modification; protein ubiquitination. Its function is as follows. Catalyzes the covalent attachment of ubiquitin to other proteins. Acts as an essential factor of the anaphase promoting complex/cyclosome (APC/C), a cell cycle-regulated ubiquitin ligase that controls progression through mitosis. Acts by specifically elongating polyubiquitin chains initiated by the E2 enzyme vih/UbcH10 on APC/C substrates, enhancing the degradation of APC/C substrates by the proteasome and promoting mitotic exit. This chain is Ubiquitin-conjugating enzyme E2 S, found in Drosophila simulans (Fruit fly).